Reading from the N-terminus, the 739-residue chain is UPF0313 protein YgiQ (739 aa).

Residues 372 to 650 (AYEMIRFSVN…KALLRYHDPA (279 aa)) form the Radical SAM core domain. Residues cysteine 386, cysteine 390, and cysteine 393 each contribute to the [4Fe-4S] cluster site. Residues 685-739 (REARRQNRNTRPALTKHTPMATQRQTPATAKKASSTQSRPVNAGAKKRPKAAVGR) form a disordered region. Residues 704 to 724 (MATQRQTPATAKKASSTQSRP) show a composition bias toward polar residues. The segment covering 729–739 (AKKRPKAAVGR) has biased composition (basic residues).

The protein belongs to the UPF0313 family. The cofactor is [4Fe-4S] cluster.

This is UPF0313 protein YgiQ (ygiQ) from Escherichia coli (strain K12).